We begin with the raw amino-acid sequence, 325 residues long: tRNA dimethylallyltransferase (325 aa).

21 to 28 (GPTASGKS) provides a ligand contact to ATP. Residue 23-28 (TASGKS) coordinates substrate. An interaction with substrate tRNA region spans residues 166 to 170 (QRLAR).

It belongs to the IPP transferase family. As to quaternary structure, monomer. Mg(2+) is required as a cofactor.

It catalyses the reaction adenosine(37) in tRNA + dimethylallyl diphosphate = N(6)-dimethylallyladenosine(37) in tRNA + diphosphate. Its function is as follows. Catalyzes the transfer of a dimethylallyl group onto the adenine at position 37 in tRNAs that read codons beginning with uridine, leading to the formation of N6-(dimethylallyl)adenosine (i(6)A). The sequence is that of tRNA dimethylallyltransferase from Acidiphilium cryptum (strain JF-5).